A 251-amino-acid chain; its full sequence is Octanoyltransferase (251 aa).

The BPL/LPL catalytic domain occupies 49 to 230; it reads DEIADQILVL…DLDDAFAGRL (182 aa). Residues 87–94, 160–162, and 173–175 contribute to the substrate site; these read RGGRITWH, ALG, and GLA. The Acyl-thioester intermediate role is filled by C191.

This sequence belongs to the LipB family.

The protein resides in the cytoplasm. The enzyme catalyses octanoyl-[ACP] + L-lysyl-[protein] = N(6)-octanoyl-L-lysyl-[protein] + holo-[ACP] + H(+). It functions in the pathway protein modification; protein lipoylation via endogenous pathway; protein N(6)-(lipoyl)lysine from octanoyl-[acyl-carrier-protein]: step 1/2. Catalyzes the transfer of endogenously produced octanoic acid from octanoyl-acyl-carrier-protein onto the lipoyl domains of lipoate-dependent enzymes. Lipoyl-ACP can also act as a substrate although octanoyl-ACP is likely to be the physiological substrate. This is Octanoyltransferase from Corynebacterium efficiens (strain DSM 44549 / YS-314 / AJ 12310 / JCM 11189 / NBRC 100395).